Reading from the N-terminus, the 173-residue chain is Photosystem I reaction center subunit XI (173 aa).

The next 2 membrane-spanning stretches (helical) occupy residues 92–112 and 148–168; these read LAGL…LSLY and LIGG…LGII.

This sequence belongs to the PsaL family.

Its subcellular location is the cellular thylakoid membrane. This chain is Photosystem I reaction center subunit XI, found in Nostoc punctiforme (strain ATCC 29133 / PCC 73102).